A 224-amino-acid chain; its full sequence is UPF0758 protein IL0240 (224 aa).

Residues 102-224 form the MPN domain; sequence GFTEPTMVKD…PISFAERGLL (123 aa). The Zn(2+) site is built by histidine 173, histidine 175, and aspartate 186. The short motif at 173 to 186 is the JAMM motif element; that stretch reads HNHPSGVAEPSQAD.

Belongs to the UPF0758 family.

The protein is UPF0758 protein IL0240 of Idiomarina loihiensis (strain ATCC BAA-735 / DSM 15497 / L2-TR).